We begin with the raw amino-acid sequence, 786 residues long: Endonuclease MutS2 (786 aa).

332–339 provides a ligand contact to ATP; the sequence is GPNTGGKT. Residues 711–786 enclose the Smr domain; sequence IDLRGMDSEE…GTGVTVVILK (76 aa).

Belongs to the DNA mismatch repair MutS family. MutS2 subfamily. As to quaternary structure, homodimer. Binds to stalled ribosomes, contacting rRNA.

In terms of biological role, endonuclease that is involved in the suppression of homologous recombination and thus may have a key role in the control of bacterial genetic diversity. Acts as a ribosome collision sensor, splitting the ribosome into its 2 subunits. Detects stalled/collided 70S ribosomes which it binds and splits by an ATP-hydrolysis driven conformational change. Acts upstream of the ribosome quality control system (RQC), a ribosome-associated complex that mediates the extraction of incompletely synthesized nascent chains from stalled ribosomes and their subsequent degradation. Probably generates substrates for RQC. This chain is Endonuclease MutS2, found in Clostridium perfringens (strain 13 / Type A).